The sequence spans 561 residues: DNA ligase (561 aa).

ATP is bound at residue E247. Residue K249 is the N6-AMP-lysine intermediate of the active site. R254, R269, E299, F339, R414, and K420 together coordinate ATP.

It belongs to the ATP-dependent DNA ligase family. As to quaternary structure, monomer. It depends on Mg(2+) as a cofactor.

The catalysed reaction is ATP + (deoxyribonucleotide)n-3'-hydroxyl + 5'-phospho-(deoxyribonucleotide)m = (deoxyribonucleotide)n+m + AMP + diphosphate.. DNA ligase that seals nicks in double-stranded DNA during DNA replication, DNA recombination and DNA repair. The polypeptide is DNA ligase (Pyrococcus furiosus (strain ATCC 43587 / DSM 3638 / JCM 8422 / Vc1)).